A 370-amino-acid polypeptide reads, in one-letter code: Molybdenum import ATP-binding protein ModC (370 aa).

Positions 1-232 constitute an ABC transporter domain; that stretch reads MLDIDVLRQQ…PDIPDFAAQR (232 aa). 30 to 37 contributes to the ATP binding site; that stretch reads GRSGAGKT. The Mop domain occupies 292 to 363; sequence MVSVQNILAA…IKAMSLLRDE (72 aa).

Belongs to the ABC transporter superfamily. Molybdate importer (TC 3.A.1.8) family. In terms of assembly, the complex is composed of two ATP-binding proteins (ModC), two transmembrane proteins (ModB) and a solute-binding protein (ModA).

The protein resides in the cell inner membrane. It carries out the reaction molybdate(out) + ATP + H2O = molybdate(in) + ADP + phosphate + H(+). In terms of biological role, part of the ABC transporter complex ModABC involved in molybdenum import. Responsible for energy coupling to the transport system. In Rhodospirillum rubrum (strain ATCC 11170 / ATH 1.1.1 / DSM 467 / LMG 4362 / NCIMB 8255 / S1), this protein is Molybdenum import ATP-binding protein ModC.